A 178-amino-acid polypeptide reads, in one-letter code: Inorganic pyrophosphatase (178 aa).

Substrate is bound by residues Lys31, Arg45, and Tyr57. Asp67, Asp72, and Asp104 together coordinate Mg(2+). Substrate is bound at residue Tyr141.

The protein belongs to the PPase family. As to quaternary structure, homohexamer. Mg(2+) serves as cofactor.

It localises to the cytoplasm. The catalysed reaction is diphosphate + H2O = 2 phosphate + H(+). Catalyzes the hydrolysis of inorganic pyrophosphate (PPi) forming two phosphate ions. The sequence is that of Inorganic pyrophosphatase from Leptospira interrogans serogroup Icterohaemorrhagiae serovar copenhageni (strain Fiocruz L1-130).